Reading from the N-terminus, the 150-residue chain is Small ribosomal subunit protein uS15 (150 aa).

Residues 1 to 10 are compositionally biased toward basic residues; the sequence is MPHRSRHKRG. The disordered stretch occupies residues 1–21; it reads MPHRSRHKRGSSGSVRPATKT.

It belongs to the universal ribosomal protein uS15 family. Part of the 30S ribosomal subunit.

This Caldivirga maquilingensis (strain ATCC 700844 / DSM 13496 / JCM 10307 / IC-167) protein is Small ribosomal subunit protein uS15.